The primary structure comprises 318 residues: Cytochrome c biogenesis protein CcsA (318 aa).

8 consecutive transmembrane segments (helical) span residues 17–37 (VLAL…ISFW), 45–65 (SAVV…QLVL), 75–95 (ISNL…AQLL), 104–124 (IVSA…SFAL), 149–169 (VIMC…AVLF), 224–244 (TITV…VWAN), 258–275 (TWAL…HTRF), and 287–307 (VAVA…LLGI).

The protein belongs to the CcmF/CycK/Ccl1/NrfE/CcsA family. In terms of assembly, may interact with ccs1.

It is found in the cellular thylakoid membrane. Its function is as follows. Required during biogenesis of c-type cytochromes (cytochrome c6 and cytochrome f) at the step of heme attachment. In Prochlorococcus marinus (strain MIT 9313), this protein is Cytochrome c biogenesis protein CcsA.